A 650-amino-acid polypeptide reads, in one-letter code: Macrolide export ATP-binding/permease protein MacB (650 aa).

Positions 6–244 constitute an ABC transporter domain; it reads LKLTGITRRF…ASSPEAASSP (239 aa). 42 to 49 contributes to the ATP binding site; it reads GASGSGKS. Positions 227–246 are disordered; it reads QTRPEEATASSPEAASSPAT. The span at 233-246 shows a compositional bias: low complexity; that stretch reads ATASSPEAASSPAT. Helical transmembrane passes span 275–295, 523–543, 580–600, and 615–635; these read FLTM…VALG, LTLL…IGVM, LVCL…GVLF, and SIIA…FFPA.

This sequence belongs to the ABC transporter superfamily. Macrolide exporter (TC 3.A.1.122) family. As to quaternary structure, homodimer. Part of the tripartite efflux system MacAB-TolC, which is composed of an inner membrane transporter, MacB, a periplasmic membrane fusion protein, MacA, and an outer membrane component, TolC. The complex forms a large protein conduit and can translocate molecules across both the inner and outer membranes. Interacts with MacA.

It localises to the cell inner membrane. In terms of biological role, part of the tripartite efflux system MacAB-TolC. MacB is a non-canonical ABC transporter that contains transmembrane domains (TMD), which form a pore in the inner membrane, and an ATP-binding domain (NBD), which is responsible for energy generation. Confers resistance against macrolides. The protein is Macrolide export ATP-binding/permease protein MacB of Pectobacterium atrosepticum (strain SCRI 1043 / ATCC BAA-672) (Erwinia carotovora subsp. atroseptica).